The following is a 176-amino-acid chain: Lipoprotein signal peptidase (176 aa).

A run of 3 helical transmembrane segments spans residues 12–32 (WYWM…WVLA), 67–87 (WQRW…TIWL), and 94–116 (MWRL…IDRL). Active-site residues include Asp123 and Asp141. The helical transmembrane segment at 137–157 (FNIADSAICVGAALIIIDSII) threads the bilayer.

This sequence belongs to the peptidase A8 family.

The protein resides in the cell inner membrane. It catalyses the reaction Release of signal peptides from bacterial membrane prolipoproteins. Hydrolyzes -Xaa-Yaa-Zaa-|-(S,diacylglyceryl)Cys-, in which Xaa is hydrophobic (preferably Leu), and Yaa (Ala or Ser) and Zaa (Gly or Ala) have small, neutral side chains.. Its pathway is protein modification; lipoprotein biosynthesis (signal peptide cleavage). Its function is as follows. This protein specifically catalyzes the removal of signal peptides from prolipoproteins. In Shewanella woodyi (strain ATCC 51908 / MS32), this protein is Lipoprotein signal peptidase.